The following is a 484-amino-acid chain: Diaminopimelate decarboxylase 1, chloroplastic (484 aa).

Positions 1 to 28 (MAAATQFLSQPSSLNPHQLKNQTSQRSR) are enriched in polar residues. Residues 1-30 (MAAATQFLSQPSSLNPHQLKNQTSQRSRSI) form a disordered region. The N-terminal 49 residues, 1 to 49 (MAAATQFLSQPSSLNPHQLKNQTSQRSRSIPVLSLKSTLKPLKRLSVKA), are a transit peptide targeting the chloroplast. Ala-50 is modified (N-acetylalanine). Lys-125 carries the post-translational modification N6-(pyridoxal phosphate)lysine. Residues Gly-304 and 340 to 343 (EPGR) each bind pyridoxal 5'-phosphate. Residues Arg-343, Arg-379, and Tyr-383 each contribute to the substrate site. Residue Cys-411 is the Proton donor of the active site. Substrate is bound by residues Glu-412 and Tyr-440. Tyr-440 lines the pyridoxal 5'-phosphate pocket.

Belongs to the Orn/Lys/Arg decarboxylase class-II family. LysA subfamily. In terms of assembly, homodimer. Pyridoxal 5'-phosphate serves as cofactor.

It localises to the plastid. Its subcellular location is the chloroplast. It catalyses the reaction meso-2,6-diaminopimelate + H(+) = L-lysine + CO2. It participates in amino-acid biosynthesis; L-lysine biosynthesis via DAP pathway; L-lysine from DL-2,6-diaminopimelate: step 1/1. Specifically catalyzes the decarboxylation of meso-diaminopimelate (meso-DAP) to L-lysine. In Arabidopsis thaliana (Mouse-ear cress), this protein is Diaminopimelate decarboxylase 1, chloroplastic (LYSA1).